We begin with the raw amino-acid sequence, 132 residues long: uncharacterized protein (132 aa).

Residue K59 forms a Glycyl lysine isopeptide (Lys-Gly) (interchain with G-Cter in SAMP2) linkage.

It belongs to the OsmC/Ohr family.

This is an uncharacterized protein from Haloferax volcanii (strain ATCC 29605 / DSM 3757 / JCM 8879 / NBRC 14742 / NCIMB 2012 / VKM B-1768 / DS2) (Halobacterium volcanii).